The primary structure comprises 215 residues: MAVGLDRADKSNYALRLKEMFNKEIRLQCRETNISKMSSKFHDNLLTAMEKADWQQRELERIERQLVLNRQELEKRLLLEKELTRELEATKLQEATVREHNNELMECIHALKRATGTSINHDALPARVKGVTVLRNTDGDQWIPFDLAVTDTEGLNSLCQKLQSNNIDVNKWRQLVSLATEMSMKWNYSTPNRRDNAKVDIIEIDLTSPTNQIIL.

Positions 43–114 (DNLLTAMEKA…MECIHALKRA (72 aa)) form a coiled coil.

The protein belongs to the SPC25 family. In terms of assembly, component of the Ndc80 complex, which is composed of Ndc80, Nuf2 and Spc25.

The protein resides in the nucleus. The protein localises to the chromosome. Its subcellular location is the centromere. It localises to the kinetochore. In terms of biological role, acts as a component of the essential kinetochore-associated Ndc80 complex, which is required for chromosome segregation and spindle checkpoint activity during meiosis and mitosis. Required for kinetochore integrity and the organization of stable microtubule binding sites in the outer plate of the kinetochore. Participates in SAC signaling that responds specifically to disruptions in spindle microtubule dynamics. The NDC80 complex synergistically enhances the affinity of the SKA1 complex for microtubules and may allow the NDC80 complex to track depolymerizing microtubules. This Drosophila ananassae (Fruit fly) protein is Kinetochore protein Spc25.